A 352-amino-acid polypeptide reads, in one-letter code: Holliday junction branch migration complex subunit RuvB (352 aa).

The segment at 13–201 (FSFRKKELRL…FGISQKIEFY (189 aa)) is large ATPase domain (RuvB-L). Residues Arg-41, Gly-82, Lys-85, Thr-86, Thr-87, 148-150 (EDF), Arg-191, Tyr-201, and Arg-238 each bind ATP. Thr-86 is a Mg(2+) binding site. The interval 202 to 273 (TCDELKQIIV…LIKKALNSYQ (72 aa)) is small ATPAse domain (RuvB-S). Residues 276-352 (EKGLDSLDRH…KYIDSKDDNF (77 aa)) are head domain (RuvB-H). The DNA site is built by Arg-330 and Arg-335.

Belongs to the RuvB family. In terms of assembly, homohexamer. Forms an RuvA(8)-RuvB(12)-Holliday junction (HJ) complex. HJ DNA is sandwiched between 2 RuvA tetramers; dsDNA enters through RuvA and exits via RuvB. An RuvB hexamer assembles on each DNA strand where it exits the tetramer. Each RuvB hexamer is contacted by two RuvA subunits (via domain III) on 2 adjacent RuvB subunits; this complex drives branch migration. In the full resolvosome a probable DNA-RuvA(4)-RuvB(12)-RuvC(2) complex forms which resolves the HJ.

The protein resides in the cytoplasm. The enzyme catalyses ATP + H2O = ADP + phosphate + H(+). In terms of biological role, the RuvA-RuvB-RuvC complex processes Holliday junction (HJ) DNA during genetic recombination and DNA repair, while the RuvA-RuvB complex plays an important role in the rescue of blocked DNA replication forks via replication fork reversal (RFR). RuvA specifically binds to HJ cruciform DNA, conferring on it an open structure. The RuvB hexamer acts as an ATP-dependent pump, pulling dsDNA into and through the RuvAB complex. RuvB forms 2 homohexamers on either side of HJ DNA bound by 1 or 2 RuvA tetramers; 4 subunits per hexamer contact DNA at a time. Coordinated motions by a converter formed by DNA-disengaged RuvB subunits stimulates ATP hydrolysis and nucleotide exchange. Immobilization of the converter enables RuvB to convert the ATP-contained energy into a lever motion, pulling 2 nucleotides of DNA out of the RuvA tetramer per ATP hydrolyzed, thus driving DNA branch migration. The RuvB motors rotate together with the DNA substrate, which together with the progressing nucleotide cycle form the mechanistic basis for DNA recombination by continuous HJ branch migration. Branch migration allows RuvC to scan DNA until it finds its consensus sequence, where it cleaves and resolves cruciform DNA. The protein is Holliday junction branch migration complex subunit RuvB of Prochlorococcus marinus (strain AS9601).